We begin with the raw amino-acid sequence, 953 residues long: Trafficking kinesin-binding protein 1 (953 aa).

An HAP1 N-terminal domain is found at 47 to 354 (LEEQLPHYKL…EELKNLRNKT (308 aa)). A coiled-coil region spans residues 104 to 356 (QMTKTYNDID…LKNLRNKTMP (253 aa)). The segment at 359-509 (TSRRYHSLGL…RRLSLRRENY (151 aa)) is interaction with HGS. Ser447 carries an O-linked (GlcNAc) serine glycan. The interval 472–495 (AADLGNDERSKKPGTPGTPGSHDL) is disordered. Residues 492 to 532 (SHDLETALRRLSLRRENYLSERRFFEEEQERKLQELAEKGE) adopt a coiled-coil conformation. A Phosphoserine modification is found at Ser537. Residues 658–672 (PGKCMSQTNSTFTFT) form an interaction with OGT region. Ser680 and Ser719 each carry an O-linked (GlcNAc) serine glycan. Ser719 carries the post-translational modification Phosphoserine. The disordered stretch occupies residues 777 to 796 (VIPSTPPNSPMQTPTSSPPS). Residues 786–796 (PMQTPTSSPPS) show a composition bias toward low complexity. A Phosphoserine modification is found at Ser919. O-linked (GlcNAc) threonine glycosylation is present at Thr935.

It belongs to the milton family. Interacts with RHOT1 and RHOT2. Found in a complex with KIF5B, OGT, RHOT1 and RHOT2. Interacts with HGS. Interacts with GABRA1. Interacts with KIF5C. Interacts with OGT; stable interaction is not required for glycosylation of this protein by OGT. Isoform 1 interacts with OGT. Post-translationally, O-glycosylated. Glycosylated by OGT; glycosylation in response to increased extracellular glucose levels is required for and leads to regulation of mitochondrial motility by OGT. In terms of tissue distribution, high expression in spinal cord and moderate expression in all other tissues and specific brain regions examined. Expressed in all cell lines examined.

It localises to the cytoplasm. The protein resides in the nucleus. The protein localises to the mitochondrion. Its subcellular location is the early endosome. It is found in the endosome. It localises to the mitochondrion membrane. The protein resides in the cell cortex. Functionally, involved in the regulation of endosome-to-lysosome trafficking, including endocytic trafficking of EGF-EGFR complexes and GABA-A receptors. Involved in mitochondrial motility. When O-glycosylated, abolishes mitochondrial motility. Crucial for recruiting OGT to the mitochondrial surface of neuronal processes. TRAK1 and RHOT form an essential protein complex that links KIF5 to mitochondria for light chain-independent, anterograde transport of mitochondria. The sequence is that of Trafficking kinesin-binding protein 1 (TRAK1) from Homo sapiens (Human).